The chain runs to 493 residues: Probable cytochrome P450 CYP36A1 (493 aa).

3 consecutive transmembrane segments (helical) span residues 1–21 (MLFA…CRFA), 60–80 (GGIF…YDML), and 290–310 (QLIV…IIVL). Position 440 (Cys440) interacts with heme.

The protein belongs to the cytochrome P450 family. The cofactor is heme.

It is found in the membrane. Its function is as follows. Cytochromes P450 are a group of heme-thiolate monooxygenases. They oxidize a variety of structurally unrelated compounds, including steroids, fatty acids, and xenobiotics. The polypeptide is Probable cytochrome P450 CYP36A1 (cyp-36A1) (Caenorhabditis elegans).